The following is a 496-amino-acid chain: MLVKTLGAHFAAGQNAKKCSCCALLISLLCVLLLSLNPLPVTSHVTSAGSSTALSSDPNLVLVNKCCEKFEIHVDHECQQVNETDYFQPMFTSYGGEQNRPVKFKFVIGIPNCGSMQMWPIYHYAGSSDKLVLLDDGRLRHYTNAENEAEERHGIQSDYEEDIAGSLEPLYHDYDKGLYCIDKATSSTGEENVLFANICLARKEIKWSDSNFLLRKILNPIFHGISLVILLVIAIIYFILPTLRDLVGNIVTTIAMCLMVSQAADLVRIFTELTSHVSFIVADIILCFSLLAAFFWLNSFGFYIWKTFRSRNVFLRVTDGRKYCYYSAYAWGCTATMAALAVFAHFFLDAESYKQEHMVGEQETIGWLGICIFFAPIACTILVNIFFYVTTRKLINRRTVYGRIAHKLKANFIMFSLMLLVMSIAWLFLIMSWLQMEGLLYAHIVVNALQTPLLLYICVLRQRHVTFLLKKTCCYNEPPSANDWGDELHYMNGNDY.

At 1 to 219 (MLVKTLGAHF…SNFLLRKILN (219 aa)) the chain is on the extracellular side. Asn82 is a glycosylation site (N-linked (GlcNAc...) asparagine). Residues 220–240 (PIFHGISLVILLVIAIIYFIL) traverse the membrane as a helical segment. The Cytoplasmic segment spans residues 241-246 (PTLRDL). A helical membrane pass occupies residues 247–267 (VGNIVTTIAMCLMVSQAADLV). Over 268-276 (RIFTELTSH) the chain is Extracellular. The chain crosses the membrane as a helical span at residues 277-297 (VSFIVADIILCFSLLAAFFWL). Residues 298–327 (NSFGFYIWKTFRSRNVFLRVTDGRKYCYYS) lie on the Cytoplasmic side of the membrane. The helical transmembrane segment at 328-348 (AYAWGCTATMAALAVFAHFFL) threads the bilayer. At 349-366 (DAESYKQEHMVGEQETIG) the chain is on the extracellular side. A helical transmembrane segment spans residues 367 to 387 (WLGICIFFAPIACTILVNIFF). Residues 388 to 411 (YVTTRKLINRRTVYGRIAHKLKAN) lie on the Cytoplasmic side of the membrane. Residues 412 to 432 (FIMFSLMLLVMSIAWLFLIMS) form a helical membrane-spanning segment. Over 433-438 (WLQMEG) the chain is Extracellular. Residues 439–459 (LLYAHIVVNALQTPLLLYICV) form a helical membrane-spanning segment. The Cytoplasmic portion of the chain corresponds to 460 to 496 (LRQRHVTFLLKKTCCYNEPPSANDWGDELHYMNGNDY).

This sequence belongs to the G-protein coupled receptor 2 family. Mth subfamily.

The protein localises to the cell membrane. The sequence is that of Probable G-protein coupled receptor Mth-like 5 (mthl5) from Drosophila melanogaster (Fruit fly).